The sequence spans 122 residues: Small ribosomal subunit protein uS13 (122 aa).

Residues 95 to 122 (GLPVRGQRTHTNARTRKGKAKPIAGKKK) form a disordered region.

It belongs to the universal ribosomal protein uS13 family. Part of the 30S ribosomal subunit. Forms a loose heterodimer with protein S19. Forms two bridges to the 50S subunit in the 70S ribosome.

In terms of biological role, located at the top of the head of the 30S subunit, it contacts several helices of the 16S rRNA. In the 70S ribosome it contacts the 23S rRNA (bridge B1a) and protein L5 of the 50S subunit (bridge B1b), connecting the 2 subunits; these bridges are implicated in subunit movement. Contacts the tRNAs in the A and P-sites. This chain is Small ribosomal subunit protein uS13, found in Sphingopyxis alaskensis (strain DSM 13593 / LMG 18877 / RB2256) (Sphingomonas alaskensis).